Consider the following 361-residue polypeptide: Endo-1,4-beta-xylanase 2 (361 aa).

The N-terminal stretch at 1–26 (MHFSTITAALALLGLGAATPTDYSTS) is a signal peptide. Residues 46-354 (IGTALTIRDD…KPAYSSVLKT (309 aa)) enclose the GH10 domain. 2 N-linked (GlcNAc...) asparagine glycosylation sites follow: asparagine 88 and asparagine 130. Glutamate 160 (proton donor) is an active-site residue. Glutamate 276 (nucleophile) is an active-site residue. Cysteines 304 and 310 form a disulfide.

This sequence belongs to the glycosyl hydrolase 10 (cellulase F) family.

It localises to the secreted. It carries out the reaction Endohydrolysis of (1-&gt;4)-beta-D-xylosidic linkages in xylans.. Its pathway is glycan degradation; xylan degradation. Functionally, endo-1,4-beta-xylanase involved in the hydrolysis of xylan, a major structural heterogeneous polysaccharide found in plant biomass representing the second most abundant polysaccharide in the biosphere, after cellulose. Hydrolyzes birch-wood xylan, with a similar activity toward oat-spelt xylan. Also shows weak activities toward pNP-beta-D-cellobioside and pNP-beta-D-xylopyranoside, but no detectable activity toward carboxymethyl cellulose and pNP-beta-L-arabinofuranoside.-. In Aureobasidium pullulans (Black yeast), this protein is Endo-1,4-beta-xylanase 2 (xynII).